A 338-amino-acid polypeptide reads, in one-letter code: GTP 3',8-cyclase (338 aa).

One can recognise a Radical SAM core domain in the interval 8–227; that stretch reads KLQRPLKDLR…DMIHQVMPLE (220 aa). Arginine 17 serves as a coordination point for GTP. Residues cysteine 24 and cysteine 28 each coordinate [4Fe-4S] cluster. Tyrosine 30 is a binding site for S-adenosyl-L-methionine. Residue cysteine 31 coordinates [4Fe-4S] cluster. Arginine 71 is a binding site for GTP. Glycine 75 lines the S-adenosyl-L-methionine pocket. Residue threonine 102 participates in GTP binding. An S-adenosyl-L-methionine-binding site is contributed by serine 126. A GTP-binding site is contributed by lysine 163. Methionine 197 is an S-adenosyl-L-methionine binding site. [4Fe-4S] cluster is bound by residues cysteine 261 and cysteine 264. 266 to 268 contacts GTP; sequence RAR. Cysteine 278 lines the [4Fe-4S] cluster pocket.

It belongs to the radical SAM superfamily. MoaA family. Monomer and homodimer. Requires [4Fe-4S] cluster as cofactor.

The enzyme catalyses GTP + AH2 + S-adenosyl-L-methionine = (8S)-3',8-cyclo-7,8-dihydroguanosine 5'-triphosphate + 5'-deoxyadenosine + L-methionine + A + H(+). It functions in the pathway cofactor biosynthesis; molybdopterin biosynthesis. Its function is as follows. Catalyzes the cyclization of GTP to (8S)-3',8-cyclo-7,8-dihydroguanosine 5'-triphosphate. This is GTP 3',8-cyclase from Bacillus anthracis (strain CDC 684 / NRRL 3495).